The following is a 174-amino-acid chain: Photosystem II repair protein PSB27-H1, chloroplastic (174 aa).

Positions 1 to 35 (MASASATATLLKPNLPPHKPTIIASSVSPPLPPPR) are disordered. Threonine 94 bears the Phosphothreonine mark. The residue at position 132 (tyrosine 132) is a Phosphotyrosine.

This sequence belongs to the Psb27 family.

Its subcellular location is the plastid. The protein resides in the chloroplast thylakoid membrane. Probably involved in repair of photodamaged photosystem II (PSII). In Arabidopsis thaliana (Mouse-ear cress), this protein is Photosystem II repair protein PSB27-H1, chloroplastic (PSB27-1).